The sequence spans 430 residues: Glutamate-1-semialdehyde 2,1-aminomutase (430 aa).

Position 265 is an N6-(pyridoxal phosphate)lysine (Lys-265).

The protein belongs to the class-III pyridoxal-phosphate-dependent aminotransferase family. HemL subfamily. As to quaternary structure, homodimer. It depends on pyridoxal 5'-phosphate as a cofactor.

The protein localises to the cytoplasm. The enzyme catalyses (S)-4-amino-5-oxopentanoate = 5-aminolevulinate. It participates in porphyrin-containing compound metabolism; protoporphyrin-IX biosynthesis; 5-aminolevulinate from L-glutamyl-tRNA(Glu): step 2/2. In Shewanella sp. (strain MR-4), this protein is Glutamate-1-semialdehyde 2,1-aminomutase.